A 258-amino-acid chain; its full sequence is UPF0246 protein Sden_2729 (258 aa).

The protein belongs to the UPF0246 family.

The protein is UPF0246 protein Sden_2729 of Shewanella denitrificans (strain OS217 / ATCC BAA-1090 / DSM 15013).